Consider the following 132-residue polypeptide: Chemokine-like protein TAFA-5 (132 aa).

The signal sequence occupies residues 1 to 43; sequence MAPSPRTGSRQDATALPSMSSTFWAFMILASLLIAYCSQLAAG. Residue N113 is glycosylated (N-linked (GlcNAc...) asparagine).

It belongs to the TAFA family. As to expression, expressed in the subcutaneous and perirenal adipose tissue (at protein level). Highly expressed in adipose tissue with moderate expression in the brain and ovary. Isoform 2: Brain-specific.

It localises to the secreted. Functionally, acts as a chemokine-like protein by regulating cell proliferation and migration through activation of G protein-coupled receptors (GPCRs), such as S1PR2 and FPR2. Stimulates chemotactic migration of macrophages mediated by the MAPK3/ERK1 and AKT1 pathway. Blocks TNFSF11/RANKL-induced osteoclast formation from macrophages by inhibiting up-regulation of osteoclast fusogenic and differentiation genes. Stimulation of macrophage migration and inhibition of osteoclast formation is mediated via GPCR FPR2. Acts as an adipokine by negatively regulating vascular smooth muscle cell (VSMC) proliferation and migration in response to platelet-derived growth factor stimulation via GPCR S1PR2 and G protein GNA12/GNA13-transmitted RHOA signaling. Inhibits injury-induced cell proliferation and neointima formation in the femoral arteries. The polypeptide is Chemokine-like protein TAFA-5 (Homo sapiens (Human)).